We begin with the raw amino-acid sequence, 187 residues long: TATA-box-binding protein (187 aa).

A run of 2 repeats spans residues 10-86 (IENV…FDKL) and 101-179 (VQNI…VSRL).

The protein belongs to the TBP family.

In terms of biological role, general factor that plays a role in the activation of archaeal genes transcribed by RNA polymerase. Binds specifically to the TATA box promoter element which lies close to the position of transcription initiation. This chain is TATA-box-binding protein, found in Natronomonas pharaonis (strain ATCC 35678 / DSM 2160 / CIP 103997 / JCM 8858 / NBRC 14720 / NCIMB 2260 / Gabara) (Halobacterium pharaonis).